We begin with the raw amino-acid sequence, 1481 residues long: Cystic fibrosis transmembrane conductance regulator (1481 aa).

Residues 1–77 are Cytoplasmic-facing; it reads MQRSPLEKAS…KLINALRRCF (77 aa). A helical transmembrane segment spans residues 78–98; it reads FWRFMFYGILLYLGEVTKAVQ. Residues 81–365 enclose the ABC transmembrane type-1 1 domain; sequence FMFYGILLYL…WAVQTWYDSL (285 aa). Topologically, residues 99-122 are extracellular; sequence PLLLGRIIASYDPDNKEERSIAIY. A helical transmembrane segment spans residues 123 to 146; sequence LGIGLCLLFIVRTLLLHPAIFGLH. Topologically, residues 147 to 195 are cytoplasmic; the sequence is HIGMQMRIAMFSLIYKKTLKLSSRVLDKISIGQLVSLLSNNLNKFDEGL. The helical transmembrane segment at 196-216 threads the bilayer; the sequence is ALAHFVWIVPLQVALLMGLIW. Residues 217-222 lie on the Extracellular side of the membrane; the sequence is ELLQAS. Residues 223–243 traverse the membrane as a helical segment; that stretch reads AFCGLGFLIVLALFQAGLGRM. At 244 to 298 the chain is on the cytoplasmic side; sequence MMKYRDQRAGKINERLVITSEMIENIQSVKAYCWEEAMEKMIENLRQTELKLTRK. A helical membrane pass occupies residues 299–319; that stretch reads AAYVRYFNSSAFFFSGFFVVF. Topologically, residues 320–339 are extracellular; that stretch reads LSVLPYALIKGIVLRKIFTT. A helical membrane pass occupies residues 340–358; sequence ISFCIVLRMAVTRQFPWAV. At 359-858 the chain is on the cytoplasmic side; that stretch reads QTWYDSLGAI…YLRYITVHKS (500 aa). Residues W401, S434, 458 to 465, and Q493 contribute to the ATP site; that span reads GSTGAGKT. The ABC transporter 1 domain maps to 423–646; it reads NDDDSLFFSN…RPDFSSKLMG (224 aa). Residue C524 is the site of S-palmitoyl cysteine attachment. S549 and S660 each carry phosphoserine. The interval 654-831 is disordered R region; it reads SAERRNSILT…EEINEEDLKE (178 aa). At S670 the chain carries Phosphoserine; by PKA. Phosphoserine is present on S686. K688 participates in a covalent cross-link: Glycyl lysine isopeptide (Lys-Gly) (interchain with G-Cter in ubiquitin). 2 positions are modified to phosphoserine: S700 and S712. T717 carries the phosphothreonine modification. Residues S737, S753, S768, S790, S795, and S813 each carry the phosphoserine modification. Residues 859–879 traverse the membrane as a helical segment; sequence LIFVLIWCLVIFLAEVAASLV. The 297-residue stretch at 859 to 1155 folds into the ABC transmembrane type-1 2 domain; it reads LIFVLIWCLV…AVNSSIDVDS (297 aa). Topologically, residues 880 to 918 are extracellular; sequence VLWFLGNTPPQDKGNSTYSRNNSYAVIITRTSSYYVFYI. N-linked (GlcNAc...) asparagine glycosylation is found at N894 and N900. Residues 919-939 traverse the membrane as a discontinuously helical segment; the sequence is YVGVADTLLAMGFFRGLPLVH. The Cytoplasmic segment spans residues 940-990; the sequence is TLITVSKILHHKMLHSVLQAPMSTLNTLKAGGILNRFSKDIAILDDLLPLT. The chain crosses the membrane as a helical span at residues 991-1011; the sequence is IFDFIQLLLIVIGAIAVVAVL. Over 1012-1013 the chain is Extracellular; that stretch reads QP. Residues 1014–1034 traverse the membrane as a helical segment; it reads YIFVATVPVIVAFIMLRAYFL. Residues 1035–1095 are Cytoplasmic-facing; the sequence is QTSQQLKQLE…TANWFLYLST (61 aa). The helical transmembrane segment at 1096 to 1116 threads the bilayer; it reads LRWFQMRIEMIFVIFFIAVTF. At 1117 to 1130 the chain is on the extracellular side; it reads ISILTTGEGEGTVG. The chain crosses the membrane as a helical span at residues 1131-1151; it reads IILTLAMNIMSTLQWAVNSSI. The Cytoplasmic portion of the chain corresponds to 1152–1481; it reads DVDSLMRSVS…TEEEVQDTRL (330 aa). The region spanning 1211–1444 is the ABC transporter 2 domain; the sequence is MTVKDLTAKY…RSLFRQAISP (234 aa). Residues Y1220 and 1245-1252 contribute to the ATP site; that span reads GRTGSGKS. The interaction with GORASP2 stretch occupies residues 1387–1481; that stretch reads RTLKQAFADC…TEEEVQDTRL (95 aa). A lipid anchor (S-palmitoyl cysteine) is attached at C1396. A phosphoserine mark is found at S1445 and S1457. The segment at 1462-1481 is disordered; the sequence is QPQIAALKEETEEEVQDTRL. A compositionally biased stretch (acidic residues) spans 1471-1481; it reads ETEEEVQDTRL. Positions 1479–1481 match the PDZ-binding motif; that stretch reads TRL.

Belongs to the ABC transporter superfamily. ABCC family. CFTR transporter (TC 3.A.1.202) subfamily. In terms of assembly, monomer; does not require oligomerization for channel activity. May form oligomers in the membrane. Interacts with SLC26A3, SLC26A6 and NHERF1. Interacts with SHANK2. Interacts with MYO6. Interacts (via C-terminus) with GOPC (via PDZ domain); this promotes CFTR internalization and thereby decreases channel activity. Interacts with SLC4A7 through NHERF1. Found in a complex with MYO5B and RAB11A. Interacts with ANO1. Interacts with SLC26A8. Interacts with AHCYL1; the interaction increases CFTR activity. Interacts with CSE1L. The core-glycosylated form interacts with GORASP2 (via PDZ GRASP-type 1 domain) in respone to ER stress. Interacts with MARCHF2; the interaction leads to CFTR ubiqtuitination and degradation. Interacts with ADGRG2. N-glycosylated. In terms of processing, phosphorylated; cAMP treatment promotes phosphorylation and activates the channel. Dephosphorylation decreases the ATPase activity (in vitro). Phosphorylation at PKA sites activates the channel. Phosphorylation at PKC sites enhances the response to phosphorylation by PKA. Phosphorylated by AMPK; this inhibits channel activity. Post-translationally, ubiquitinated, leading to its degradation in the lysosome. Deubiquitination by USP10 in early endosomes enhances its endocytic recycling to the cell membrane. Ubiquitinated by RNF185 during ER stress. Ubiquitinated by MARCHF2.

It localises to the apical cell membrane. The protein resides in the early endosome membrane. The protein localises to the cell membrane. Its subcellular location is the recycling endosome membrane. It is found in the endoplasmic reticulum membrane. It localises to the nucleus. The enzyme catalyses ATP + H2O + closed Cl(-) channel = ADP + phosphate + open Cl(-) channel.. It carries out the reaction chloride(in) = chloride(out). It catalyses the reaction hydrogencarbonate(in) = hydrogencarbonate(out). The catalysed reaction is ATP + H2O = ADP + phosphate + H(+). Epithelial ion channel that plays an important role in the regulation of epithelial ion and water transport and fluid homeostasis. Mediates the transport of chloride ions across the cell membrane. Possesses an intrinsic ATPase activity and utilizes ATP to gate its channel; the passive flow of anions through the channel is gated by cycles of ATP binding and hydrolysis by the ATP-binding domains. The ion channel is also permeable to HCO(3)(-); selectivity depends on the extracellular chloride concentration. Exerts its function also by modulating the activity of other ion channels and transporters. Contributes to the regulation of the pH and the ion content of the epithelial fluid layer. Modulates the activity of the epithelial sodium channel (ENaC) complex, in part by regulating the cell surface expression of the ENaC complex. May regulate bicarbonate secretion and salvage in epithelial cells by regulating the transporter SLC4A7. Can inhibit the chloride channel activity of ANO1. Plays a role in the chloride and bicarbonate homeostasis during sperm epididymal maturation and capacitation. This chain is Cystic fibrosis transmembrane conductance regulator, found in Chlorocebus aethiops (Green monkey).